The following is a 465-amino-acid chain: CUGBP Elav-like family member 3 (465 aa).

2 RRM domains span residues 7 to 88 (IKLF…PADS) and 95 to 175 (RKLF…FADT). Over residues 346 to 359 (PPALVAQQPPPPPQ) the composition is skewed to pro residues. Positions 346–379 (PPALVAQQPPPPPQQQQQQQQQQQQQQQREGPDG) are disordered. The span at 360 to 373 (QQQQQQQQQQQQQQ) shows a compositional bias: low complexity. An RRM 3 domain is found at 380–458 (CNIFIYHLPQ…KRLKVQLKRP (79 aa)).

The protein belongs to the CELF/BRUNOL family. As to expression, expressed in brain.

The protein resides in the nucleus. It is found in the cytoplasm. Its function is as follows. RNA-binding protein involved in the regulation of pre-mRNA alternative splicing. Mediates exon inclusion and/or exclusion in pre-mRNA that are subject to tissue-specific and developmentally regulated alternative splicing. Specifically activates exon 5 inclusion of cardiac isoforms of TNNT2 during heart remodeling at the juvenile to adult transition. Activates the splicing of MAPT/Tau exon 10. Binds to muscle-specific splicing enhancer (MSE) intronic sites flanking the alternative exon 5 of TNNT2 pre-mRNA. The polypeptide is CUGBP Elav-like family member 3 (CELF3) (Homo sapiens (Human)).